Consider the following 359-residue polypeptide: Glycerol-3-phosphate dehydrogenase [NAD(P)+] (359 aa).

Thr11, Trp12, Arg32, and Lys107 together coordinate NADPH. Positions 107 and 138 each coordinate sn-glycerol 3-phosphate. Ala142 contacts NADPH. 5 residues coordinate sn-glycerol 3-phosphate: Lys193, Asp246, Ser256, Arg257, and Asn258. Lys193 serves as the catalytic Proton acceptor. Arg257 lines the NADPH pocket. 2 residues coordinate NADPH: Val281 and Glu283.

It belongs to the NAD-dependent glycerol-3-phosphate dehydrogenase family.

The protein localises to the cytoplasm. It catalyses the reaction sn-glycerol 3-phosphate + NAD(+) = dihydroxyacetone phosphate + NADH + H(+). The enzyme catalyses sn-glycerol 3-phosphate + NADP(+) = dihydroxyacetone phosphate + NADPH + H(+). It participates in membrane lipid metabolism; glycerophospholipid metabolism. In terms of biological role, catalyzes the reduction of the glycolytic intermediate dihydroxyacetone phosphate (DHAP) to sn-glycerol 3-phosphate (G3P), the key precursor for phospholipid synthesis. The polypeptide is Glycerol-3-phosphate dehydrogenase [NAD(P)+] (Dehalococcoides mccartyi (strain ATCC BAA-2100 / JCM 16839 / KCTC 5957 / BAV1)).